The primary structure comprises 231 residues: Ribosomal RNA small subunit methyltransferase G (231 aa).

S-adenosyl-L-methionine is bound by residues G92, L97, 143–144, and R162; that span reads VE.

The protein belongs to the methyltransferase superfamily. RNA methyltransferase RsmG family.

The protein resides in the cytoplasm. It carries out the reaction guanosine(527) in 16S rRNA + S-adenosyl-L-methionine = N(7)-methylguanosine(527) in 16S rRNA + S-adenosyl-L-homocysteine. Specifically methylates the N7 position of guanine in position 527 of 16S rRNA. The protein is Ribosomal RNA small subunit methyltransferase G of Burkholderia thailandensis (strain ATCC 700388 / DSM 13276 / CCUG 48851 / CIP 106301 / E264).